The primary structure comprises 295 residues: Probable intramembrane protease C25B8.17 (295 aa).

A helical transmembrane segment spans residues 1 to 21; that stretch reads MEGVILASSALFTVYIGAKWS. Over 22–35 the chain is Cytoplasmic; sequence AQEEEPEEKQLINK. The helical transmembrane segment at 36 to 56 threads the bilayer; that stretch reads RLAVLFPIFGGVTLVLMYLAL. Over 57–63 the chain is Lumenal; sequence RYLSKEY. A helical transmembrane segment spans residues 64–84; that stretch reads IQLILQGYASLASIICFVRSF. Residues 85-89 are Cytoplasmic-facing; it reads NPKTT. Residues 90-106 traverse the membrane as a helical segment; sequence FGKITATMSSIAIALFY. At 107–111 the chain is on the lumenal side; the sequence is FKTKH. Residues 112–130 form a helical membrane-spanning segment; the sequence is WMASNILAWALAANSISIM. Residues 131-139 are Cytoplasmic-facing; sequence RIDSYNTGA. The chain crosses the membrane as a helical span at residues 140–160; that stretch reads LLLGALFFYDIYFVFGTEVMV. Residue aspartate 149 is part of the active site. Topologically, residues 161–183 are lumenal; the sequence is TVATGIDIPAKYVLPQFKNPTRL. The helical transmembrane segment at 184–204 threads the bilayer; it reads SMLGLGDIVMPGLMLALMYRF. Residue aspartate 190 is part of the active site. Residues 205–221 are Cytoplasmic-facing; it reads DLHYYINSTSQPKKHST. The chain crosses the membrane as a helical span at residues 222-244; it reads YFRNTFIAYGLGLGVTNFALYYF. Topologically, residues 245 to 249 are lumenal; it reads KAAQP. Positions 249–251 match the PAL motif; that stretch reads PAL. The chain crosses the membrane as a helical span at residues 250-268; it reads ALLYLSPACIVAPLLTAWY. Over 269–295 the chain is Cytoplasmic; it reads RDELKTLFSFRSETEDETDEQDKCKST.

Belongs to the peptidase A22B family.

Its subcellular location is the endoplasmic reticulum membrane. It localises to the golgi apparatus membrane. This chain is Probable intramembrane protease C25B8.17, found in Schizosaccharomyces pombe (strain 972 / ATCC 24843) (Fission yeast).